The following is a 226-amino-acid chain: Cytidylate kinase (226 aa).

An ATP-binding site is contributed by 10–18 (GPASSGKST).

It belongs to the cytidylate kinase family. Type 1 subfamily.

It is found in the cytoplasm. It catalyses the reaction CMP + ATP = CDP + ADP. The catalysed reaction is dCMP + ATP = dCDP + ADP. The protein is Cytidylate kinase of Streptococcus equi subsp. zooepidemicus (strain MGCS10565).